The primary structure comprises 408 residues: Pleckstrin homology domain-containing family O member 1 (408 aa).

Positions 1–21 (MKKSGSGKRGPPDGNHQSAAP) are disordered. A PH domain is found at 20–131 (APEKVGWVRK…WINALSSAIT (112 aa)). Residues 132-192 (RAKNRILDEV…MLTLDLIQEE (61 aa)) are interaction with capping proteins (CPs). Positions 135–307 (NRILDEVTVE…PAQPGQLSRI (173 aa)) are interaction with ATM, CKIP, IFP35 and NMI. A disordered region spans residues 217-264 (LAGSRRRADSDRIQPSSQRASSLSRPWEKPDKGAPYTPQALKKFPSTE). Ser-226 carries the phosphoserine modification. Over residues 229 to 240 (IQPSSQRASSLS) the composition is skewed to polar residues. Residues Ser-270 and Ser-341 each carry the phosphoserine modification. The tract at residues 307 to 408 (IQDLVARKLE…QHSQYRKSLM (102 aa)) is negative regulator of AP-1 activity. Disordered stretches follow at residues 325 to 348 (VQGLGDGKRKAKDPPQSPPDSESE) and 389 to 408 (TPDSHLRQTSQHSQYRKSLM). Residues 389-401 (TPDSHLRQTSQHS) show a composition bias toward polar residues.

As to quaternary structure, heterodimer or homodimer. Interacts with CK2 and actin capping subunits (capping protein CP-alpha and CP-beta). CKIP1 and CK2 together inhibit the activity of actin capping protein at the barbed ends of actin filaments. Interacts with ATM, IFP35, JUN, JUND, NMI and PI3K. Interacts with AKT1, AKT2 and AKT3 (each isozyme of PKB), PtdIns(3,5)P2, PtdIns(4,5)P2 and PtdIns(3,4,5)P2. C-terminal fragments could be released during apoptosis via caspase-3-dependent cleavage.

The protein localises to the cell membrane. The protein resides in the nucleus. Its subcellular location is the cytoplasm. Plays a role in the regulation of the actin cytoskeleton through its interactions with actin capping protein (CP). May function to target CK2 to the plasma membrane thereby serving as an adapter to facilitate the phosphorylation of CP by protein kinase 2 (CK2). Appears to target ATM to the plasma membrane. Appears to also inhibit tumor cell growth by inhibiting AKT-mediated cell-survival. Also implicated in PI3K-regulated muscle differentiation, the regulation of AP-1 activity (plasma membrane bound AP-1 regulator that translocates to the nucleus) and the promotion of apoptosis induced by tumor necrosis factor TNF. When bound to PKB, it inhibits it probably by decreasing PKB level of phosphorylation. The chain is Pleckstrin homology domain-containing family O member 1 (Plekho1) from Mus musculus (Mouse).